The chain runs to 310 residues: Transcription factor RAX3 (310 aa).

2 HTH myb-type domains span residues Lys9–Leu62 and Arg63–Leu117. 2 DNA-binding regions (H-T-H motif) span residues Trp38–Leu62 and Trp90–Leu113.

As to expression, ubiquitous.

It localises to the nucleus. Functionally, transcription activator. Positively regulates axillary meristems (AMs) formation and development, especially during inflorescence. The chain is Transcription factor RAX3 (RAX3) from Arabidopsis thaliana (Mouse-ear cress).